Consider the following 275-residue polypeptide: 2-dehydro-3-deoxyphosphooctonate aldolase (275 aa).

The protein belongs to the KdsA family.

The protein localises to the cytoplasm. The enzyme catalyses D-arabinose 5-phosphate + phosphoenolpyruvate + H2O = 3-deoxy-alpha-D-manno-2-octulosonate-8-phosphate + phosphate. It participates in carbohydrate biosynthesis; 3-deoxy-D-manno-octulosonate biosynthesis; 3-deoxy-D-manno-octulosonate from D-ribulose 5-phosphate: step 2/3. The protein operates within bacterial outer membrane biogenesis; lipopolysaccharide biosynthesis. The polypeptide is 2-dehydro-3-deoxyphosphooctonate aldolase (Francisella philomiragia subsp. philomiragia (strain ATCC 25017 / CCUG 19701 / FSC 153 / O#319-036)).